The sequence spans 145 residues: D-aminoacyl-tRNA deacylase (145 aa).

Residues 137–138 (GP) carry the Gly-cisPro motif, important for rejection of L-amino acids motif.

It belongs to the DTD family. Homodimer.

The protein resides in the cytoplasm. It carries out the reaction glycyl-tRNA(Ala) + H2O = tRNA(Ala) + glycine + H(+). It catalyses the reaction a D-aminoacyl-tRNA + H2O = a tRNA + a D-alpha-amino acid + H(+). Functionally, an aminoacyl-tRNA editing enzyme that deacylates mischarged D-aminoacyl-tRNAs. Also deacylates mischarged glycyl-tRNA(Ala), protecting cells against glycine mischarging by AlaRS. Acts via tRNA-based rather than protein-based catalysis; rejects L-amino acids rather than detecting D-amino acids in the active site. By recycling D-aminoacyl-tRNA to D-amino acids and free tRNA molecules, this enzyme counteracts the toxicity associated with the formation of D-aminoacyl-tRNA entities in vivo and helps enforce protein L-homochirality. The sequence is that of D-aminoacyl-tRNA deacylase from Shewanella frigidimarina (strain NCIMB 400).